Here is a 289-residue protein sequence, read N- to C-terminus: Phosphatidylglycerol--prolipoprotein diacylglyceryl transferase (289 aa).

7 helical membrane-spanning segments follow: residues 23–43, 61–81, 99–119, 125–145, 199–219, 226–246, and 259–279; these read ALHW…WLAV, LLYM…VLFY, GGMS…WFAH, FFQV…AGRL, SQLY…NLFI, GSVS…TEFF, and LFSM…LMMV. R144 contacts a 1,2-diacyl-sn-glycero-3-phospho-(1'-sn-glycerol).

The protein belongs to the Lgt family.

It is found in the cell inner membrane. The enzyme catalyses L-cysteinyl-[prolipoprotein] + a 1,2-diacyl-sn-glycero-3-phospho-(1'-sn-glycerol) = an S-1,2-diacyl-sn-glyceryl-L-cysteinyl-[prolipoprotein] + sn-glycerol 1-phosphate + H(+). It functions in the pathway protein modification; lipoprotein biosynthesis (diacylglyceryl transfer). Catalyzes the transfer of the diacylglyceryl group from phosphatidylglycerol to the sulfhydryl group of the N-terminal cysteine of a prolipoprotein, the first step in the formation of mature lipoproteins. This chain is Phosphatidylglycerol--prolipoprotein diacylglyceryl transferase, found in Pectobacterium carotovorum subsp. carotovorum (strain PC1).